Reading from the N-terminus, the 327-residue chain is Phenylalanine--tRNA ligase alpha subunit (327 aa).

Glu252 contacts Mg(2+).

The protein belongs to the class-II aminoacyl-tRNA synthetase family. Phe-tRNA synthetase alpha subunit type 1 subfamily. As to quaternary structure, tetramer of two alpha and two beta subunits. The cofactor is Mg(2+).

The protein resides in the cytoplasm. It catalyses the reaction tRNA(Phe) + L-phenylalanine + ATP = L-phenylalanyl-tRNA(Phe) + AMP + diphosphate + H(+). The polypeptide is Phenylalanine--tRNA ligase alpha subunit (Shigella dysenteriae serotype 1 (strain Sd197)).